A 134-amino-acid chain; its full sequence is MKLKGKGIGKVVVEGEVIVSRKPLSFLGGVDPETGTITDPESDIKGESITGKILVFPKGKGSTVGSYILYALSKNGKGPKAIIVEEAEPIVTAGAIISGIPLITNVDISKLKTGMRVRINPQEGEVEILAEGNL.

S62 functions as the Proton acceptor in the catalytic mechanism.

It belongs to the AcnX type II small subunit family. As to quaternary structure, heterodimer composed of a large subunit (PMDh-L) and a small subunit (PMDh-S).

The catalysed reaction is (R)-5-phosphomevalonate = (2E)-3-methyl-5-phosphooxypent-2-enoate + H2O. The protein operates within isoprenoid biosynthesis; isopentenyl diphosphate biosynthesis via mevalonate pathway. In terms of biological role, component of a hydro-lyase that catalyzes the dehydration of mevalonate 5-phosphate (MVA5P) to form trans-anhydromevalonate 5-phosphate (tAHMP). Involved in the archaeal mevalonate (MVA) pathway, which provides fundamental precursors for isoprenoid biosynthesis, such as isopentenyl diphosphate (IPP) and dimethylallyl diphosphate (DMAPP). The polypeptide is Phosphomevalonate dehydratase small subunit (Pyrococcus horikoshii (strain ATCC 700860 / DSM 12428 / JCM 9974 / NBRC 100139 / OT-3)).